Here is a 345-residue protein sequence, read N- to C-terminus: Very-long-chain 3-oxoacyl-CoA reductase (345 aa).

A helical transmembrane segment spans residues 26–46; that stretch reads GAAVLLATGGLFLASRVLTFV. The NADP(+) site is built by Val71, Asp125, Asp133, Asn152, Tyr219, Lys223, Ile252, and Ser254. The active-site Proton donor is the Tyr219. The Lowers pKa of active site Tyr role is filled by Lys223.

Belongs to the short-chain dehydrogenases/reductases (SDR) family.

It localises to the endoplasmic reticulum membrane. The enzyme catalyses a very-long-chain (3R)-3-hydroxyacyl-CoA + NADP(+) = a very-long-chain 3-oxoacyl-CoA + NADPH + H(+). Its pathway is lipid metabolism; fatty acid biosynthesis. Component of the microsomal membrane bound fatty acid elongation system, which produces the 26-carbon very long-chain fatty acids (VLCFA) from palmitate. Catalyzes the reduction of the 3-ketoacyl-CoA intermediate that is formed in each cycle of fatty acid elongation. VLCFAs serve as precursors for ceramide and sphingolipids. The polypeptide is Very-long-chain 3-oxoacyl-CoA reductase (Aspergillus clavatus (strain ATCC 1007 / CBS 513.65 / DSM 816 / NCTC 3887 / NRRL 1 / QM 1276 / 107)).